Consider the following 344-residue polypeptide: tRNA N6-adenosine threonylcarbamoyltransferase (344 aa).

Residues histidine 112 and histidine 116 each coordinate Fe cation. Substrate contacts are provided by residues 135–139 (LVSGG), aspartate 168, glycine 181, and asparagine 271. Residue aspartate 299 participates in Fe cation binding.

This sequence belongs to the KAE1 / TsaD family. The cofactor is Fe(2+).

Its subcellular location is the cytoplasm. It catalyses the reaction L-threonylcarbamoyladenylate + adenosine(37) in tRNA = N(6)-L-threonylcarbamoyladenosine(37) in tRNA + AMP + H(+). Its function is as follows. Required for the formation of a threonylcarbamoyl group on adenosine at position 37 (t(6)A37) in tRNAs that read codons beginning with adenine. Is involved in the transfer of the threonylcarbamoyl moiety of threonylcarbamoyl-AMP (TC-AMP) to the N6 group of A37, together with TsaE and TsaB. TsaD likely plays a direct catalytic role in this reaction. In Sphingopyxis alaskensis (strain DSM 13593 / LMG 18877 / RB2256) (Sphingomonas alaskensis), this protein is tRNA N6-adenosine threonylcarbamoyltransferase.